The primary structure comprises 360 residues: Glutaminyl-peptide cyclotransferase (360 aa).

Residues 1-23 (MKYLKILIIVTIFFFLLINVINC) form the signal peptide. An N-linked (GlcNAc...) asparagine glycan is attached at N135. D165 is a binding site for Zn(2+). E199 (proton acceptor) is an active-site residue. E200 provides a ligand contact to Zn(2+). D251 acts as the Proton acceptor in catalysis. Position 330 (H330) interacts with Zn(2+).

The protein belongs to the glutaminyl-peptide cyclotransferase family.

It is found in the secreted. It carries out the reaction N-terminal L-glutaminyl-[peptide] = N-terminal 5-oxo-L-prolyl-[peptide] + NH4(+). Functionally, responsible for the biosynthesis of pyroglutamyl peptides. Has a bias against acidic and tryptophan residues adjacent to the N-terminal glutaminyl residue and a lack of importance of chain length after the second residue. Also catalyzes N-terminal pyroglutamate formation. This is Glutaminyl-peptide cyclotransferase (qpct) from Dictyostelium discoideum (Social amoeba).